A 209-amino-acid chain; its full sequence is Outer-membrane lipoprotein carrier protein (209 aa).

Positions Met-1–Gly-22 are cleaved as a signal peptide.

It belongs to the LolA family. In terms of assembly, monomer.

Its subcellular location is the periplasm. Functionally, participates in the translocation of lipoproteins from the inner membrane to the outer membrane. Only forms a complex with a lipoprotein if the residue after the N-terminal Cys is not an aspartate (The Asp acts as a targeting signal to indicate that the lipoprotein should stay in the inner membrane). This chain is Outer-membrane lipoprotein carrier protein, found in Alcanivorax borkumensis (strain ATCC 700651 / DSM 11573 / NCIMB 13689 / SK2).